The chain runs to 149 residues: Large ribosomal subunit protein bL9 (149 aa).

Belongs to the bacterial ribosomal protein bL9 family.

In terms of biological role, binds to the 23S rRNA. The chain is Large ribosomal subunit protein bL9 from Actinobacillus pleuropneumoniae serotype 3 (strain JL03).